A 230-amino-acid polypeptide reads, in one-letter code: MTSKIIVALDYEKEAEALALVDQIDPSLCRLKVGKEMFTTLGINFVKQLHQRNFDVFLDLKYHDIPNTVARAVRSAADLGVWMVDLHASGGLRMMEEAKKILEPYGKDAPLLIAVTVLTSMEDLDLLQIGINASPMEQVLRLAHLTQRAGLDGVVCSPQEVEILRNACGEDFKLVTPGIRPIGTDFGDQRRVMTPTAAIRAGSDYLVIGRPITQADNPAEVLRSINVSIG.

Substrate is bound by residues Asp-10, Lys-32, 59 to 68 (DLKYHDIPNT), Thr-119, Arg-180, Gln-189, Gly-209, and Arg-210. The active-site Proton donor is the Lys-61.

It belongs to the OMP decarboxylase family. Type 1 subfamily. In terms of assembly, homodimer.

It catalyses the reaction orotidine 5'-phosphate + H(+) = UMP + CO2. It functions in the pathway pyrimidine metabolism; UMP biosynthesis via de novo pathway; UMP from orotate: step 2/2. Catalyzes the decarboxylation of orotidine 5'-monophosphate (OMP) to uridine 5'-monophosphate (UMP). The polypeptide is Orotidine 5'-phosphate decarboxylase (Haemophilus influenzae (strain PittEE)).